Consider the following 432-residue polypeptide: UPF0761 membrane protein Cag_0935 (432 aa).

6 helical membrane passes run leucine 52–phenylalanine 72, asparagine 108–valine 128, phenylalanine 148–alanine 168, leucine 190–valine 210, alanine 220–phenylalanine 240, and alanine 254–valine 274.

Belongs to the UPF0761 family.

The protein resides in the cell inner membrane. This Chlorobium chlorochromatii (strain CaD3) protein is UPF0761 membrane protein Cag_0935.